The sequence spans 263 residues: Ribonuclease HII (263 aa).

Residues 74 to 262 (EHVAGLDEVG…VQETAATRQT (189 aa)) enclose the RNase H type-2 domain. A divalent metal cation is bound by residues Asp80, Glu81, and Asp172.

This sequence belongs to the RNase HII family. Mn(2+) serves as cofactor. It depends on Mg(2+) as a cofactor.

The protein resides in the cytoplasm. It catalyses the reaction Endonucleolytic cleavage to 5'-phosphomonoester.. Functionally, endonuclease that specifically degrades the RNA of RNA-DNA hybrids. The protein is Ribonuclease HII (rnhB) of Halalkalibacterium halodurans (strain ATCC BAA-125 / DSM 18197 / FERM 7344 / JCM 9153 / C-125) (Bacillus halodurans).